The primary structure comprises 425 residues: Dihydroorotase (425 aa).

Residues histidine 61 and histidine 63 each contribute to the Zn(2+) site. Residues 63-65 (HLR) and asparagine 95 each bind substrate. Residues aspartate 153, histidine 180, and histidine 233 each contribute to the Zn(2+) site. Asparagine 279 contacts substrate. Aspartate 306 is a Zn(2+) binding site. Aspartate 306 is a catalytic residue. Histidine 310 lines the substrate pocket.

Belongs to the metallo-dependent hydrolases superfamily. DHOase family. Class I DHOase subfamily. The cofactor is Zn(2+).

The enzyme catalyses (S)-dihydroorotate + H2O = N-carbamoyl-L-aspartate + H(+). It functions in the pathway pyrimidine metabolism; UMP biosynthesis via de novo pathway; (S)-dihydroorotate from bicarbonate: step 3/3. Its function is as follows. Catalyzes the reversible cyclization of carbamoyl aspartate to dihydroorotate. The chain is Dihydroorotase from Trichlorobacter lovleyi (strain ATCC BAA-1151 / DSM 17278 / SZ) (Geobacter lovleyi).